The primary structure comprises 328 residues: Probable voltage-gated potassium channel subunit beta (328 aa).

W21, Q27, and D49 together coordinate NADP(+). The Proton donor/acceptor role is filled by Y54. S152, Q178, W207, S208, P209, L210, A211, K218, R229, G285, T287, Q291, E294, and N295 together coordinate NADP(+).

This sequence belongs to the shaker potassium channel beta subunit family. Forms heteromultimeric complexes with potassium channel alpha subunits. As to expression, expressed in roots, leaves and flowers (at protein level).

Probable accessory potassium channel protein which modulates the activity of the pore-forming alpha subunit. The sequence is that of Probable voltage-gated potassium channel subunit beta (KAB1) from Arabidopsis thaliana (Mouse-ear cress).